The chain runs to 265 residues: MAERSAPVGVMDSGVGGLSVLAEIQRLLPSESLLYVADCGHVPYGEKTPDYIRQRCRRIAEFFQAQGAKAMVLACNTATVAAVADLRERYPDWPLVGMEPAVKPAAAATRSGVVGVLATTGTLQSAKFAALLDRFANDVRVVTQPCPGLVELIETGDLGSLQLRQLLLGYVQPLLAAGCDTLILGCTHYPFLRPLLAGMVPADVAIIDTGAAVARQLKRLLAARELLADGPARDAAFWSSADPRSLENILPVLWNTSGSVQRLQL.

Residues 12-13 (DS) and 44-45 (YG) each bind substrate. Cys-75 acts as the Proton donor/acceptor in catalysis. Residue 76 to 77 (NT) coordinates substrate. Cys-186 functions as the Proton donor/acceptor in the catalytic mechanism. Position 187-188 (187-188 (TH)) interacts with substrate.

The protein belongs to the aspartate/glutamate racemases family.

The enzyme catalyses L-glutamate = D-glutamate. Its pathway is cell wall biogenesis; peptidoglycan biosynthesis. Its function is as follows. Provides the (R)-glutamate required for cell wall biosynthesis. This chain is Glutamate racemase, found in Pseudomonas putida (strain W619).